Here is a 232-residue protein sequence, read N- to C-terminus: 5'-methylthioadenosine/S-adenosylhomocysteine nucleosidase (232 aa).

Catalysis depends on glutamate 12, which acts as the Proton acceptor. Residues glycine 78, methionine 153, and 174 to 175 each bind substrate; that span reads ME. The active-site Proton donor is the aspartate 198.

Belongs to the PNP/UDP phosphorylase family. MtnN subfamily.

It carries out the reaction S-adenosyl-L-homocysteine + H2O = S-(5-deoxy-D-ribos-5-yl)-L-homocysteine + adenine. It catalyses the reaction S-methyl-5'-thioadenosine + H2O = 5-(methylsulfanyl)-D-ribose + adenine. The catalysed reaction is 5'-deoxyadenosine + H2O = 5-deoxy-D-ribose + adenine. The protein operates within amino-acid biosynthesis; L-methionine biosynthesis via salvage pathway; S-methyl-5-thio-alpha-D-ribose 1-phosphate from S-methyl-5'-thioadenosine (hydrolase route): step 1/2. In terms of biological role, catalyzes the irreversible cleavage of the glycosidic bond in both 5'-methylthioadenosine (MTA) and S-adenosylhomocysteine (SAH/AdoHcy) to adenine and the corresponding thioribose, 5'-methylthioribose and S-ribosylhomocysteine, respectively. Also cleaves 5'-deoxyadenosine, a toxic by-product of radical S-adenosylmethionine (SAM) enzymes, into 5-deoxyribose and adenine. In Anoxybacillus flavithermus (strain DSM 21510 / WK1), this protein is 5'-methylthioadenosine/S-adenosylhomocysteine nucleosidase.